The primary structure comprises 405 residues: Tryptophan synthase beta chain (405 aa).

Position 98 is an N6-(pyridoxal phosphate)lysine (Lys98).

The protein belongs to the TrpB family. As to quaternary structure, tetramer of two alpha and two beta chains. Pyridoxal 5'-phosphate is required as a cofactor.

It carries out the reaction (1S,2R)-1-C-(indol-3-yl)glycerol 3-phosphate + L-serine = D-glyceraldehyde 3-phosphate + L-tryptophan + H2O. It functions in the pathway amino-acid biosynthesis; L-tryptophan biosynthesis; L-tryptophan from chorismate: step 5/5. Its function is as follows. The beta subunit is responsible for the synthesis of L-tryptophan from indole and L-serine. The sequence is that of Tryptophan synthase beta chain from Xylella fastidiosa (strain M12).